The chain runs to 172 residues: Trypsin inhibitor DE-3 (172 aa).

2 cysteine pairs are disulfide-bonded: C39-C83 and C132-C139.

It belongs to the protease inhibitor I3 (leguminous Kunitz-type inhibitor) family.

Inhibition of trypsin. The protein is Trypsin inhibitor DE-3 of Erythrina variegata (Indian coral tree).